Here is a 406-residue protein sequence, read N- to C-terminus: COP9 signalosome complex subunit 4 (406 aa).

At alanine 2 the chain carries N-acetylalanine. The residue at position 25 (lysine 25) is an N6-acetyllysine. Residues 197-366 form the PCI domain; sequence YRRKFIEAAQ…GIVHFETREA (170 aa).

The protein belongs to the CSN4 family. In terms of assembly, component of the CSN complex, composed of COPS1/GPS1, COPS2, COPS3, COPS4, COPS5, COPS6, COPS7 (COPS7A or COPS7B), COPS8 and COPS9 isoform 1. In the complex, it probably interacts directly with COPS1, COPS2, COPS3, COPS5, COPS6, COPS7 (COPS7A or COPS7B) and COPS8. Interacts with TOR1A; the interaction is direct and associates TOR1A and SNAPIN with the CSN complex. Interacts with STON2; controls STON2 neddylation levels. Interacts with ERCC6.

The protein resides in the cytoplasm. The protein localises to the nucleus. Its subcellular location is the cytoplasmic vesicle. It localises to the secretory vesicle. It is found in the synaptic vesicle. In terms of biological role, component of the COP9 signalosome complex (CSN), a complex involved in various cellular and developmental processes. The CSN complex is an essential regulator of the ubiquitin (Ubl) conjugation pathway by mediating the deneddylation of the cullin subunits of SCF-type E3 ligase complexes, leading to decrease the Ubl ligase activity of SCF-type complexes such as SCF, CSA or DDB2. Also involved in the deneddylation of non-cullin subunits such as STON2. The complex is also involved in phosphorylation of p53/TP53, c-jun/JUN, IkappaBalpha/NFKBIA, ITPK1, IRF8/ICSBP and SNAPIN, possibly via its association with CK2 and PKD kinases. CSN-dependent phosphorylation of TP53 and JUN promotes and protects degradation by the Ubl system, respectively. This chain is COP9 signalosome complex subunit 4 (COPS4), found in Homo sapiens (Human).